A 527-amino-acid chain; its full sequence is MRFLRFLKIFFTVIRFGLDEMMLSRVNDRRVRLLLRITTIGRKFDQPPGVRLRLALESLGPIFVKFGQVLSTRRDLLRPDIATELAKLQDQVPPFDSAVAIAIIEKSLGAPVDTIFDDFERVPVASASIAQVHFATLKIGQHAGKQVAVKVLRPNMLPVIDSDLALLRDIAVWAERLWADGKRLKPREVVAEFDKYLHDELDLMREAANGSQLRRNFAGLDLLLVPEMYWEYCTANVLVMERMVGVPISQVDTLRVAGVDIPKLAREGVEIFFTQVFRDGFFHADMHPGNIQVSLDPAHFGRYIALDFGIIGALSDFDKNYLAQNFLAFFKRDYHRVATLHLESGWVPATTRVEELESAIRAVCEPYFDRALKDISLGQVLMRLFSTSRRFNVEIQPQLVLLQKTMLNVEGLGRSLDPELDLWKTAKPYLERWMNEQIGAKGWYERLKIEAPQWSKTLPQLPRLIHHVLAQRHDAQQRGINDETIRQILLEQKRTNRLLQGLLMFGVAVGVGAVLARAWLAIAYGGY.

The Protein kinase domain maps to 118-501; it reads DFERVPVASA…QKRTNRLLQG (384 aa). ATP-binding positions include 124-132 and Lys-150; that span reads VASASIAQV. Residue Asp-285 is the Proton acceptor of the active site. Residues 502-522 form a helical membrane-spanning segment; sequence LLMFGVAVGVGAVLARAWLAI.

This sequence belongs to the ABC1 family. UbiB subfamily.

It is found in the cell inner membrane. It participates in cofactor biosynthesis; ubiquinone biosynthesis [regulation]. Its function is as follows. Is probably a protein kinase regulator of UbiI activity which is involved in aerobic coenzyme Q (ubiquinone) biosynthesis. The protein is Probable protein kinase UbiB of Paraburkholderia phymatum (strain DSM 17167 / CIP 108236 / LMG 21445 / STM815) (Burkholderia phymatum).